We begin with the raw amino-acid sequence, 451 residues long: Tubulin gamma-1 chain (451 aa).

Ser-131 is modified (phosphoserine; by BRSK1). Residue 142–148 participates in GTP binding; the sequence is AGGTGSG.

This sequence belongs to the tubulin family. In terms of assembly, component of the gamma-tubulin ring complex (gTuRC) consisting of TUBGCP2, TUBGCP3, TUBGCP4, TUBGCP5 and TUBGCP6 and gamma-tubulin TUBG1 or TUBG2. TUBGCP2, TUBGCP3, TUBGCP4, TUBGCP5 and TUBGCP6 assemble in a 5:5:2:1:1 stoichiometry; each is associated with a gamma-tubulin, thereby arranging 14 gamma-tubulins in a helical manner. Gamma-tubulin at the first position is blocked by TUBGCP3 at the last position, allowing 13 protafilaments to grow into a microtubule. The gTuRC (via TUBGCP3 and TUBGCP6) interacts with ACTB and MZT1; the interactions form a luminal bridge that stabilizes the initial structure during complex assembly. The gTuRC (via TUBGCP2) interacts with MZT2A/MZT2B and CDK5RAP2 (via CM1 motif); the interactions play a role in gTuRC activation. Interacts with alpha-beta tubulin heterodimers; the interaction allows microtubules to nucleate from the gTuRC. Interacts with B9D2. Interacts with CDK5RAP2; the interaction is leading to centrosomal localization of TUBG1 and CDK5RAP2. Interacts with CIMAP3. Interacts with SAS6 and NUP62 at the centrosome. Interacts with EML3 (phosphorylated at 'Thr-881') and HAUS8. Interacts with DNM2; this interaction may participate in centrosome cohesion. Interacts with CCDC66. In terms of processing, phosphorylation at Ser-131 by BRSK1 regulates centrosome duplication, possibly by mediating relocation of gamma-tubulin and its associated proteins from the cytoplasm to the centrosome.

It is found in the cytoplasm. The protein resides in the cytoskeleton. It localises to the microtubule organizing center. Its subcellular location is the centrosome. The protein localises to the spindle. In terms of biological role, tubulin is the major constituent of microtubules, protein filaments consisting of alpha- and beta-tubulin heterodimers. Gamma-tubulin is a key component of the gamma-tubulin ring complex (gTuRC) which mediates microtubule nucleation. The gTuRC regulates the minus-end nucleation of alpha-beta tubulin heterodimers that grow into microtubule protafilaments, a critical step in centrosome duplication and spindle formation. This is Tubulin gamma-1 chain from Homo sapiens (Human).